Consider the following 206-residue polypeptide: LexA repressor (206 aa).

The segment at residues 28-48 (VREIGEAVGLASSSTVHGHLS) is a DNA-binding region (H-T-H motif). Catalysis depends on for autocatalytic cleavage activity residues Ser-129 and Lys-167.

This sequence belongs to the peptidase S24 family. In terms of assembly, homodimer.

The catalysed reaction is Hydrolysis of Ala-|-Gly bond in repressor LexA.. In terms of biological role, represses a number of genes involved in the response to DNA damage (SOS response), including recA and lexA. In the presence of single-stranded DNA, RecA interacts with LexA causing an autocatalytic cleavage which disrupts the DNA-binding part of LexA, leading to derepression of the SOS regulon and eventually DNA repair. In Staphylococcus epidermidis (strain ATCC 35984 / DSM 28319 / BCRC 17069 / CCUG 31568 / BM 3577 / RP62A), this protein is LexA repressor.